The chain runs to 186 residues: ATP synthase subunit delta (186 aa).

Belongs to the ATPase delta chain family. As to quaternary structure, F-type ATPases have 2 components, F(1) - the catalytic core - and F(0) - the membrane proton channel. F(1) has five subunits: alpha(3), beta(3), gamma(1), delta(1), epsilon(1). F(0) has three main subunits: a(1), b(2) and c(10-14). The alpha and beta chains form an alternating ring which encloses part of the gamma chain. F(1) is attached to F(0) by a central stalk formed by the gamma and epsilon chains, while a peripheral stalk is formed by the delta and b chains.

It localises to the cell inner membrane. In terms of biological role, f(1)F(0) ATP synthase produces ATP from ADP in the presence of a proton or sodium gradient. F-type ATPases consist of two structural domains, F(1) containing the extramembraneous catalytic core and F(0) containing the membrane proton channel, linked together by a central stalk and a peripheral stalk. During catalysis, ATP synthesis in the catalytic domain of F(1) is coupled via a rotary mechanism of the central stalk subunits to proton translocation. Its function is as follows. This protein is part of the stalk that links CF(0) to CF(1). It either transmits conformational changes from CF(0) to CF(1) or is implicated in proton conduction. The sequence is that of ATP synthase subunit delta from Bacteroides thetaiotaomicron (strain ATCC 29148 / DSM 2079 / JCM 5827 / CCUG 10774 / NCTC 10582 / VPI-5482 / E50).